The primary structure comprises 469 residues: Programmed cell death protein 4 (469 aa).

Residue Met1 is modified to N-acetylmethionine. Disordered regions lie at residues 1-30 (MDVE…DEEN) and 58-128 (KAKR…GTPG). The segment covering 7–23 (QILNVNPTDPDNLSDSL) has biased composition (polar residues). Ser25 is subject to Phosphoserine. Residues 58-64 (KAKRRLR) carry the Nuclear localization signal motif. Ser67 carries the phosphoserine; by PKB and RPS6KB1 modification. 5 positions are modified to phosphoserine: Ser68, Ser71, Ser76, Ser78, and Ser94. Residues 70 to 76 (DSGRGDS) carry the Phosphodegron motif. Positions 114–125 (KKGGAGGKGVWG) are enriched in gly residues. Tyr152 bears the Phosphotyrosine mark. In terms of domain architecture, MI 1 spans 163–284 (AFEKTLTPII…CNTYIDSYKG (122 aa)). Residues Ser313 and Ser317 each carry the phosphoserine modification. Residues 326 to 449 (HLVKEIDMLL…SKQLRDLCPS (124 aa)) enclose the MI 2 domain. The short motif at 448 to 454 (PSRGRKR) is the Nuclear localization signal element. Ser457 bears the Phosphoserine mark.

The protein belongs to the PDCD4 family. As to quaternary structure, interacts (via MI domains) with EIF4A2. Interacts (via MI domains) with EIF4A1 (via N-terminal domain). Heterotrimer with EIF4A1; one molecule of PDCD4 binds two molecules of EIF4A1. Interacts with EIF4G1. May form a complex with EIF4A1 and EIF4G1. The interaction between PDCD4 and EIF4A1 interferes with the interaction between EIF4A1 and EIF4G. When phosphorylated, interacts with BTRC and FBXW11. In terms of processing, polyubiquitinated, leading to its proteasomal degradation. Rapidly degraded in response to mitogens. Phosphorylation of the phosphodegron promotes interaction with BTRC and proteasomal degradation. Phosphorylated at Ser-67 by RPS6KB1 in response to mitogens; phosphorylation promotes proteasomal degradation of PDCD4.

Its subcellular location is the nucleus. It localises to the cytoplasm. Inhibits translation initiation and cap-dependent translation. May excert its function by hindering the interaction between EIF4A1 and EIF4G. Inhibits the helicase activity of EIF4A. Modulates the activation of JUN kinase. Down-regulates the expression of MAP4K1, thus inhibiting events important in driving invasion, namely, MAPK85 activation and consequent JUN-dependent transcription. May play a role in apoptosis. Tumor suppressor. Inhibits tumor promoter-induced neoplastic transformation. Binds RNA. In Rattus norvegicus (Rat), this protein is Programmed cell death protein 4 (Pdcd4).